The chain runs to 337 residues: Ornithine carbamoyltransferase (337 aa).

Carbamoyl phosphate contacts are provided by residues 56–59 (STRT), Gln83, Arg107, and 134–137 (HPTQ). Residues Asn168, Asp232, and 236-237 (SM) contribute to the L-ornithine site. Residues 274 to 275 (CL) and Arg320 contribute to the carbamoyl phosphate site.

Belongs to the aspartate/ornithine carbamoyltransferase superfamily. OTCase family.

The protein localises to the cytoplasm. It carries out the reaction carbamoyl phosphate + L-ornithine = L-citrulline + phosphate + H(+). It participates in amino-acid biosynthesis; L-arginine biosynthesis; L-arginine from L-ornithine and carbamoyl phosphate: step 1/3. Reversibly catalyzes the transfer of the carbamoyl group from carbamoyl phosphate (CP) to the N(epsilon) atom of ornithine (ORN) to produce L-citrulline. The sequence is that of Ornithine carbamoyltransferase (argI) from Shigella flexneri.